The chain runs to 1070 residues: DNA-directed RNA polymerase subunit beta (1070 aa).

This sequence belongs to the RNA polymerase beta chain family. As to quaternary structure, in plastids the minimal PEP RNA polymerase catalytic core is composed of four subunits: alpha, beta, beta', and beta''. When a (nuclear-encoded) sigma factor is associated with the core the holoenzyme is formed, which can initiate transcription.

Its subcellular location is the plastid. The protein localises to the chloroplast. The catalysed reaction is RNA(n) + a ribonucleoside 5'-triphosphate = RNA(n+1) + diphosphate. Its function is as follows. DNA-dependent RNA polymerase catalyzes the transcription of DNA into RNA using the four ribonucleoside triphosphates as substrates. The chain is DNA-directed RNA polymerase subunit beta from Solanum lycopersicum (Tomato).